The chain runs to 223 residues: Urease accessory protein UreF (223 aa).

It belongs to the UreF family. In terms of assembly, ureD, UreF and UreG form a complex that acts as a GTP-hydrolysis-dependent molecular chaperone, activating the urease apoprotein by helping to assemble the nickel containing metallocenter of UreC. The UreE protein probably delivers the nickel.

It localises to the cytoplasm. Functionally, required for maturation of urease via the functional incorporation of the urease nickel metallocenter. The chain is Urease accessory protein UreF from Rhizobium etli (strain ATCC 51251 / DSM 11541 / JCM 21823 / NBRC 15573 / CFN 42).